A 68-amino-acid polypeptide reads, in one-letter code: Medusin-DA1 (68 aa).

The first 22 residues, 1-22 (MAFLKKSLFLVLFLGLVSLSVC), serve as a signal peptide directing secretion. Positions 23–48 (EEEKRENEEEKNEQEEDDREERNEEK) are excised as a propeptide. The tract at residues 25–47 (EKRENEEEKNEQEEDDREERNEE) is disordered. A compositionally biased stretch (acidic residues) spans 31 to 41 (EEKNEQEEDDR). Leu-67 is modified (leucine amide).

Belongs to the frog skin active peptide (FSAP) family. Medusin subfamily. As to expression, expressed by the skin glands.

Its subcellular location is the secreted. Functionally, antimicrobial peptide with activity against Gram-positive bacteria (S.aureus, MIC=32 mg/L) and fungi (C.albicans, MIC=64 mg/L). Shows weak hemolytic activity. The chain is Medusin-DA1 from Agalychnis dacnicolor (Giant Mexican leaf frog).